The chain runs to 36 residues: uncharacterized protein (36 aa).

This is an uncharacterized protein from Halalkalibacterium halodurans (strain ATCC BAA-125 / DSM 18197 / FERM 7344 / JCM 9153 / C-125) (Bacillus halodurans).